Reading from the N-terminus, the 361-residue chain is Chorismate synthase (361 aa).

R47 provides a ligand contact to NADP(+). FMN is bound by residues 124 to 126 (RAS), G286, 301 to 305 (KPTAT), and R327.

Belongs to the chorismate synthase family. As to quaternary structure, homotetramer. FMNH2 is required as a cofactor.

It carries out the reaction 5-O-(1-carboxyvinyl)-3-phosphoshikimate = chorismate + phosphate. Its pathway is metabolic intermediate biosynthesis; chorismate biosynthesis; chorismate from D-erythrose 4-phosphate and phosphoenolpyruvate: step 7/7. Functionally, catalyzes the anti-1,4-elimination of the C-3 phosphate and the C-6 proR hydrogen from 5-enolpyruvylshikimate-3-phosphate (EPSP) to yield chorismate, which is the branch point compound that serves as the starting substrate for the three terminal pathways of aromatic amino acid biosynthesis. This reaction introduces a second double bond into the aromatic ring system. The sequence is that of Chorismate synthase from Akkermansia muciniphila (strain ATCC BAA-835 / DSM 22959 / JCM 33894 / BCRC 81048 / CCUG 64013 / CIP 107961 / Muc).